The following is a 200-amino-acid chain: GTP cyclohydrolase-2 (200 aa).

49–53 contacts GTP; it reads RIHSE. Residues Cys54, Cys65, and Cys67 each coordinate Zn(2+). GTP-binding positions include Gln70, 92–94, and Thr114; that span reads EGR. Asp126 acts as the Proton acceptor in catalysis. Catalysis depends on Arg128, which acts as the Nucleophile. The GTP site is built by Thr149 and Lys154.

This sequence belongs to the GTP cyclohydrolase II family. Zn(2+) is required as a cofactor.

The enzyme catalyses GTP + 4 H2O = 2,5-diamino-6-hydroxy-4-(5-phosphoribosylamino)-pyrimidine + formate + 2 phosphate + 3 H(+). It functions in the pathway cofactor biosynthesis; riboflavin biosynthesis; 5-amino-6-(D-ribitylamino)uracil from GTP: step 1/4. Functionally, catalyzes the conversion of GTP to 2,5-diamino-6-ribosylamino-4(3H)-pyrimidinone 5'-phosphate (DARP), formate and pyrophosphate. This Saccharophagus degradans (strain 2-40 / ATCC 43961 / DSM 17024) protein is GTP cyclohydrolase-2.